A 416-amino-acid chain; its full sequence is Putative gustatory receptor 57a (416 aa).

Residues 1–13 lie on the Cytoplasmic side of the membrane; it reads MAVLYFFREPETV. A helical membrane pass occupies residues 14-34; it reads FDCAAFICILQFLMGCNGFGI. Over 35-48 the chain is Extracellular; it reads RRSTFRISWASRIY. A helical transmembrane segment spans residues 49–69; the sequence is SMSVAIAAFCCLFGSLSVLLA. Topologically, residues 70 to 83 are cytoplasmic; that stretch reads EEDIRERLAKADNL. Residues 84 to 104 form a helical membrane-spanning segment; that stretch reads VLSISALELLMSTLVFGVTVI. Residues 105–143 are Extracellular-facing; it reads SLQVFARRHLGIYQRLAALDARLMSDFGANLNYRKMLRK. A helical membrane pass occupies residues 144 to 164; the sequence is NIAVLGIVTTIYLMAINSAAV. Residues 165 to 171 lie on the Cytoplasmic side of the membrane; it reads QVASGHR. The chain crosses the membrane as a helical span at residues 172 to 192; that stretch reads ALFLLFALCYTIVTGGPHFTG. Topologically, residues 193–295 are extracellular; sequence YVHMTLAEML…NEEENGSCYR (103 aa). Asn290 carries N-linked (GlcNAc...) asparagine glycosylation. Residues 296–316 form a helical membrane-spanning segment; sequence MLGYLALVMIPPLYKLLIAPF. At 317–374 the chain is on the cytoplasmic side; sequence YCDRTIYEARRCLRLVEKLDDWFPQKSSLRPLVESLMSWRIQAKIQFTSGLDVVLSRK. Residues 375–395 traverse the membrane as a helical segment; the sequence is VIGLFTSILVNYLLILIQFAM. At 396–416 the chain is on the extracellular side; sequence TQKMGEQIEQQKIALQEWIGF.

This sequence belongs to the insect chemoreceptor superfamily. Gustatory receptor (GR) family. Gr57a subfamily. As to expression, in larvae, is expressed in neurons of the terminal external chemosensory organ as well as in the dorsal pharyngeal sense organ.

Its subcellular location is the cell membrane. Its function is as follows. Probable gustatory receptor which mediates acceptance or avoidance behavior, depending on its substrates. This is Putative gustatory receptor 57a (Gr57a) from Drosophila melanogaster (Fruit fly).